The chain runs to 299 residues: Recombination-associated protein RdgC (299 aa).

It belongs to the RdgC family.

The protein resides in the cytoplasm. It localises to the nucleoid. May be involved in recombination. The sequence is that of Recombination-associated protein RdgC from Cupriavidus pinatubonensis (strain JMP 134 / LMG 1197) (Cupriavidus necator (strain JMP 134)).